The sequence spans 421 residues: Anthranilate synthase component 1 (421 aa).

L-tryptophan is bound by residues S31 and P207 to M209. Residue G242 to T243 coordinates chorismate. E269 contributes to the Mg(2+) binding site. Residues Y357, R377, G391–G393, and G393 contribute to the chorismate site. E406 provides a ligand contact to Mg(2+).

Belongs to the anthranilate synthase component I family. Heterotetramer consisting of two non-identical subunits: a beta subunit (TrpG) and a large alpha subunit (TrpE). The cofactor is Mg(2+).

It catalyses the reaction chorismate + L-glutamine = anthranilate + pyruvate + L-glutamate + H(+). It participates in amino-acid biosynthesis; L-tryptophan biosynthesis; L-tryptophan from chorismate: step 1/5. Cooperatively feedback inhibited by tryptophan. Its function is as follows. Part of a heterotetrameric complex that catalyzes the two-step biosynthesis of anthranilate, an intermediate in the biosynthesis of L-tryptophan. In the first step, the glutamine-binding beta subunit (TrpG) of anthranilate synthase (AS) provides the glutamine amidotransferase activity which generates ammonia as a substrate that, along with chorismate, is used in the second step, catalyzed by the large alpha subunit of AS (TrpE) to produce anthranilate. In the absence of TrpG, TrpE can synthesize anthranilate directly from chorismate and high concentrations of ammonia. This chain is Anthranilate synthase component 1 (trpE), found in Saccharolobus solfataricus (strain ATCC 35092 / DSM 1617 / JCM 11322 / P2) (Sulfolobus solfataricus).